The chain runs to 427 residues: 3-phosphoshikimate 1-carboxyvinyltransferase (427 aa).

3-phosphoshikimate is bound by residues Lys22, Ser23, and Arg27. Lys22 provides a ligand contact to phosphoenolpyruvate. Residues Gly96 and Arg124 each contribute to the phosphoenolpyruvate site. Ser169, Ser170, Gln171, Ser197, Asp313, Asn336, and Lys340 together coordinate 3-phosphoshikimate. Gln171 contributes to the phosphoenolpyruvate binding site. Catalysis depends on Asp313, which acts as the Proton acceptor. Positions 344, 386, and 411 each coordinate phosphoenolpyruvate.

Belongs to the EPSP synthase family. In terms of assembly, monomer.

The protein localises to the cytoplasm. It catalyses the reaction 3-phosphoshikimate + phosphoenolpyruvate = 5-O-(1-carboxyvinyl)-3-phosphoshikimate + phosphate. Its pathway is metabolic intermediate biosynthesis; chorismate biosynthesis; chorismate from D-erythrose 4-phosphate and phosphoenolpyruvate: step 6/7. Functionally, catalyzes the transfer of the enolpyruvyl moiety of phosphoenolpyruvate (PEP) to the 5-hydroxyl of shikimate-3-phosphate (S3P) to produce enolpyruvyl shikimate-3-phosphate and inorganic phosphate. This Escherichia coli O127:H6 (strain E2348/69 / EPEC) protein is 3-phosphoshikimate 1-carboxyvinyltransferase.